The chain runs to 558 residues: Formate--tetrahydrofolate ligase (558 aa).

An ATP-binding site is contributed by 65–72; the sequence is TPAGEGKT.

Belongs to the formate--tetrahydrofolate ligase family.

The enzyme catalyses (6S)-5,6,7,8-tetrahydrofolate + formate + ATP = (6R)-10-formyltetrahydrofolate + ADP + phosphate. The protein operates within one-carbon metabolism; tetrahydrofolate interconversion. The sequence is that of Formate--tetrahydrofolate ligase from Methylobacterium nodulans (strain LMG 21967 / CNCM I-2342 / ORS 2060).